Here is a 123-residue protein sequence, read N- to C-terminus: Holo-[acyl-carrier-protein] synthase (123 aa).

Mg(2+)-binding residues include Asp-8 and Glu-56.

Belongs to the P-Pant transferase superfamily. AcpS family. The cofactor is Mg(2+).

The protein localises to the cytoplasm. The enzyme catalyses apo-[ACP] + CoA = holo-[ACP] + adenosine 3',5'-bisphosphate + H(+). Its function is as follows. Transfers the 4'-phosphopantetheine moiety from coenzyme A to a Ser of acyl-carrier-protein. This chain is Holo-[acyl-carrier-protein] synthase, found in Clostridium beijerinckii (strain ATCC 51743 / NCIMB 8052) (Clostridium acetobutylicum).